A 200-amino-acid polypeptide reads, in one-letter code: MSKVLVLKSSIMAQHSHTNQMADFFIEKWQTNHADDSITVRDLTAQSIPALDNELVHALRPSGNEMTARQKETLALSDELIAELQDNDVIVITAPMYNFHIPTQLKSYFDMIARAGVTFRYTENGPEGLLKGKQVIILTSRGGIHKDGPSDLLVPYLRLFLSFIGLTDIEFVFTEGVALGPDAANQAQQTAREVLQAIAS.

Residues Ser10, 96–99 (MYNF), and 140–143 (SRGG) contribute to the FMN site.

The protein belongs to the azoreductase type 1 family. Homodimer. Requires FMN as cofactor.

It catalyses the reaction 2 a quinone + NADH + H(+) = 2 a 1,4-benzosemiquinone + NAD(+). The catalysed reaction is N,N-dimethyl-1,4-phenylenediamine + anthranilate + 2 NAD(+) = 2-(4-dimethylaminophenyl)diazenylbenzoate + 2 NADH + 2 H(+). Functionally, quinone reductase that provides resistance to thiol-specific stress caused by electrophilic quinones. In terms of biological role, also exhibits azoreductase activity. Catalyzes the reductive cleavage of the azo bond in aromatic azo compounds to the corresponding amines. This chain is FMN-dependent NADH:quinone oxidoreductase, found in Photorhabdus laumondii subsp. laumondii (strain DSM 15139 / CIP 105565 / TT01) (Photorhabdus luminescens subsp. laumondii).